Reading from the N-terminus, the 526-residue chain is Thymocyte selection-associated high mobility group box protein TOX (526 aa).

The span at 194–203 (NMGGTNVAHN) shows a compositional bias: polar residues. The tract at residues 194–264 (NMGGTNVAHN…KKDPNEPQKP (71 aa)) is disordered. A compositionally biased stretch (low complexity) spans 209–220 (GSKSATPSPSSS). Basic and acidic residues predominate over residues 228–245 (DASKINGGEKRPASDMGK). The short motif at 237–256 (KRPASDMGKKPKTPKKKKKK) is the Nuclear localization signal element. Over residues 246-256 (KPKTPKKKKKK) the composition is skewed to basic residues. A DNA-binding region (HMG box) is located at residues 261–329 (PQKPVSAYAL…EYLKQLAAYR (69 aa)).

It belongs to the high motility group (HMG) box superfamily. Interacts with HBO1 complex composed at least of KAT7/HBO1, ING4, MEAF6, and JADE2; this complex is involved in histone acetylation. Interacts with DNMT1, LEO1, PAF1, SAP130 and SIN3A; these interactors regulate chromatin remodeling. Interacts with an array of proteins involved in RNA processing and translation and DNA replication. As to expression, expressed in neurons of the subventricular zone (at protein level). Expressed in distinct subpopulations of thymocytes undergoing positive selection: double CD4-positive CD8-positive (DP) cells, CD4-positive CD8-low transitional cells and in single CD4-positive and CD8-positive cells (at protein level). Expressed in ILC progenitors and mature ILC subsets: ILC1, ILC2 and ILC3 (at protein level). Expressed in lymphoid tissue-inducer cells and bone marrow NK cell subsets. Abundant in thymus, liver and brain. Also detected in small intestine, spleen, stomach and testis. Highly expressed in tumor-infiltrating CD8-positive T cells (at protein level).

It is found in the nucleus. Transcriptional regulator with a major role in neural stem cell commitment and corticogenesis as well as in lymphoid cell development and lymphoid tissue organogenesis. Binds to GC-rich DNA sequences in the proximity of transcription start sites and may alter chromatin structure, modifying access of transcription factors to DNA. During cortical development, controls the neural stem cell pool by inhibiting the switch from proliferative to differentiating progenitors. Beyond progenitor cells, promotes neurite outgrowth in newborn neurons migrating to reach the cortical plate. May activate or repress critical genes for neural stem cell fate such as SOX2, EOMES and ROBO2. Plays an essential role in the development of lymphoid tissue-inducer (LTi) cells, a subset necessary for the formation of secondary lymphoid organs: peripheral lymph nodes and Peyer's patches. Acts as a developmental checkpoint and regulates thymocyte positive selection toward T cell lineage commitment. Required for the development of various T cell subsets, including CD4-positive helper T cells, CD8-positive cytotoxic T cells, regulatory T cells and CD1D-dependent natural killer T (NKT) cells. Required for the differentiation of common lymphoid progenitors (CMP) to innate lymphoid cells (ILC). May regulate the NOTCH-mediated gene program, promoting differentiation of the ILC lineage. Required at the progenitor phase of NK cell development in the bone marrow to specify NK cell lineage commitment. Upon chronic antigen stimulation, diverts T cell development by promoting the generation of exhaustive T cells, while suppressing effector and memory T cell programming. May regulate the expression of genes encoding inhibitory receptors such as PDCD1 and induce the exhaustion program, to prevent the overstimulation of T cells and activation-induced cell death. The chain is Thymocyte selection-associated high mobility group box protein TOX from Mus musculus (Mouse).